A 146-amino-acid chain; its full sequence is MGRFIFVSFGLLVVFISLSGTEAGFCCPLGWSSYDEHCYQVFQQKMNWEDAEKFCTQQHTGSHLVSYESSEEVDFVVSKTLPILKASFVWIGLSNVWNACRLQWSDGTELMYNAWTAESECIASKTTDNQWWSMDCSSKRYVVCKF.

An N-terminal signal peptide occupies residues 1–23 (MGRFIFVSFGLLVVFISLSGTEA). Disulfide bonds link cysteine 27–cysteine 38, cysteine 55–cysteine 144, and cysteine 121–cysteine 136. Residues 34–145 (YDEHCYQVFQ…CSSKRYVVCK (112 aa)) enclose the C-type lectin domain.

This sequence belongs to the snaclec family. As to quaternary structure, dimer and tetramer of heterodimers of alpha and beta subunits ((alphabeta)(2) and (alphabeta)(4)); disulfide-linked. These two multimeric forms are found. Post-translationally, the complex is glycosylated. In terms of tissue distribution, expressed by the venom gland.

It localises to the secreted. Potent platelet activator that acts via GPIb (GP1BA/GP1BB). After activation by the toxin, the receptor is redistributed on platelet surface thanks to cytoskeletal translocation. The indirect activation of integrin alpha-IIb/beta-3 (ITGA2B/ITGB3) also induced by the toxin is downstream the cytoskeletal translocation of GPIb. The protein is Snaclec mucetin subunit beta of Protobothrops mucrosquamatus (Taiwan habu).